The primary structure comprises 69 residues: Small ribosomal subunit protein bS21 (69 aa).

This sequence belongs to the bacterial ribosomal protein bS21 family.

This Treponema pallidum (strain Nichols) protein is Small ribosomal subunit protein bS21 (rpsU).